A 497-amino-acid polypeptide reads, in one-letter code: tRNA (adenine(58)-N(1))-methyltransferase non-catalytic subunit TRM6 (497 aa).

Residues 81-103 (LEEPASETKEAGTDNRNIVDDGK) are disordered. The substrate stretch occupies residues 95-105 (NRNIVDDGKSQ). Thr-108 carries the post-translational modification Phosphothreonine. Substrate regions lie at residues 146 to 155 (KYIKKKKKKY) and 176 to 183 (REPGKINH). The interval 275–354 (MLSSEPKDST…EKQRRQEEQR (80 aa)) is disordered. The span at 289-307 (SNGELEEKEIAEQADEDNI) shows a compositional bias: acidic residues. The span at 328 to 354 (PENKEPKEKRSKRDYIQEKQRRQEEQR) shows a compositional bias: basic and acidic residues. Substrate-binding residues include Arg-349 and Arg-377. Substrate regions lie at residues 415–423 (RERGGVINL) and 434–441 (QVLPDRSH). The segment at 474 to 497 (TGALDPHKAEEPAAKKQKCMESAS) is disordered. Over residues 478 to 487 (DPHKAEEPAA) the composition is skewed to basic and acidic residues.

It belongs to the TRM6/GCD10 family. As to quaternary structure, heterotetramer; composed of two copies of TRMT6 and two copies of TRMT61A.

The protein resides in the nucleus. Its function is as follows. Substrate-binding subunit of tRNA (adenine-N(1)-)-methyltransferase, which catalyzes the formation of N(1)-methyladenine at position 58 (m1A58) in initiator methionyl-tRNA. Together with the TRMT61A catalytic subunit, part of a mRNA N(1)-methyltransferase complex that mediates methylation of adenosine residues at the N(1) position of a small subset of mRNAs: N(1) methylation takes place in tRNA T-loop-like structures of mRNAs and is only present at low stoichiometries. The polypeptide is tRNA (adenine(58)-N(1))-methyltransferase non-catalytic subunit TRM6 (Trmt6) (Mus musculus (Mouse)).